A 439-amino-acid polypeptide reads, in one-letter code: Ribosomal protein uS12 methylthiotransferase RimO (439 aa).

Residues 5-115 (PKIGFVSLGC…LIEAVHTHAP (111 aa)) enclose the MTTase N-terminal domain. Positions 14, 50, 79, 146, 150, and 153 each coordinate [4Fe-4S] cluster. The 238-residue stretch at 132–369 (LTPRHYSYLK…MGLQAQISAD (238 aa)) folds into the Radical SAM core domain. One can recognise a TRAM domain in the interval 372 to 439 (QRFVGTEQQV…ESTEYDLIAD (68 aa)).

Belongs to the methylthiotransferase family. RimO subfamily. The cofactor is [4Fe-4S] cluster.

The protein localises to the cytoplasm. It catalyses the reaction L-aspartate(89)-[ribosomal protein uS12]-hydrogen + (sulfur carrier)-SH + AH2 + 2 S-adenosyl-L-methionine = 3-methylsulfanyl-L-aspartate(89)-[ribosomal protein uS12]-hydrogen + (sulfur carrier)-H + 5'-deoxyadenosine + L-methionine + A + S-adenosyl-L-homocysteine + 2 H(+). Catalyzes the methylthiolation of an aspartic acid residue of ribosomal protein uS12. The protein is Ribosomal protein uS12 methylthiotransferase RimO of Francisella philomiragia subsp. philomiragia (strain ATCC 25017 / CCUG 19701 / FSC 153 / O#319-036).